The primary structure comprises 265 residues: H-2 class II histocompatibility antigen, A-D beta chain (265 aa).

Positions 1–27 are cleaved as a signal peptide; the sequence is MALQIPSLLLSAAVVVLMVLSSPRTEG. The interval 28 to 122 is beta-1; it reads GNSERHFVVQ…PETSTSLRRL (95 aa). Residues 28–226 lie on the Extracellular side of the membrane; the sequence is GNSERHFVVQ…RAQSESARSK (199 aa). Intrachain disulfides connect Cys-42–Cys-106 and Cys-145–Cys-201. A glycan (N-linked (GlcNAc...) asparagine) is linked at Asn-46. The beta-2 stretch occupies residues 123–216; it reads EQPNVAISLS…SLKSPITVEW (94 aa). The Ig-like C1-type domain occupies 125–213; that stretch reads PNVAISLSRT…EHPSLKSPIT (89 aa). Residues 217-226 form a connecting peptide region; the sequence is RAQSESARSK. Residues 227–247 form a helical membrane-spanning segment; that stretch reads MLSGIGGCVLGVIFLGLGLFI. The Cytoplasmic segment spans residues 248-265; the sequence is RHRSQKGPRGPPPAGLLQ.

This sequence belongs to the MHC class II family. In terms of processing, ubiquitinated in immature dendritic cells leading to down-regulation of MHC class II.

It is found in the membrane. This chain is H-2 class II histocompatibility antigen, A-D beta chain (H2-Ab1), found in Mus musculus (Mouse).